Reading from the N-terminus, the 464-residue chain is E3 ubiquitin-protein ligase parkin (464 aa).

Residues Met-1–Arg-76 enclose the Ubiquitin-like domain. A Phosphoserine; by PINK1 modification is found at Ser-65. The interval Val-70–Ile-96 is disordered. Residues Ser-77–Pro-236 form a necessary for PINK1-dependent localization to mitochondria region. Phosphothreonine is present on Thr-80. The segment covering Thr-80–Ile-96 has biased composition (polar residues). An RING-type 0; atypical zinc finger spans residues Pro-140–Ala-224. Thr-174 is subject to Phosphothreonine; by PINK1. The tract at residues Thr-203–Cys-237 is SYT11 binding 1. Thr-216 is modified (phosphothreonine). The interval Arg-233–Val-464 is TRIAD supradomain. Residues Cys-237, Cys-240, Cys-252, His-256, Cys-259, Cys-262, Cys-288, Cys-292, Cys-331, and Cys-336 each coordinate Zn(2+). An RING-type 1 zinc finger spans residues Cys-237–Cys-292. The SYT11 binding 2 stretch occupies residues His-256–Cys-292. Residues Thr-312–Cys-376 form an IBR-type zinc finger. Lys-348 is covalently cross-linked (Glycyl lysine isopeptide (Lys-Gly) (interchain with G-Cter in ISG15)). 4 residues coordinate Zn(2+): Cys-351, Cys-359, Cys-364, and Cys-367. Lys-368 participates in a covalent cross-link: Glycyl lysine isopeptide (Lys-Gly) (interchain with G-Cter in ISG15). Residues His-372 and Cys-376 each contribute to the Zn(2+) site. The interval Asp-377 to Thr-409 is REP. 2 residues coordinate Zn(2+): Cys-417 and Cys-420. The RING-type 2; atypical zinc finger occupies Cys-417–Cys-448. Residue Cys-430 is part of the active site. Zn(2+) is bound by residues Cys-435, Cys-440, Cys-445, Cys-448, Cys-456, and His-460.

The protein belongs to the RBR family. Parkin subfamily. In terms of assembly, forms an E3 ubiquitin ligase complex with UBE2L3 or UBE2L6. Mediates 'Lys-63'-linked polyubiquitination by associating with UBE2V1. Part of a SCF-like complex, consisting of PRKN, CUL1 and FBXW7. Interacts with SNCAIP. Binds to the C2A and C2B domains of SYT11. Interacts and regulates the turnover of SEPTIN5. Part of a complex, including STUB1, HSP70 and GPR37. The amount of STUB1 in the complex increases during ER stress. STUB1 promotes the dissociation of HSP70 from PRKN and GPR37, thus facilitating PRKN-mediated GPR37 ubiquitination. HSP70 transiently associates with unfolded GPR37 and inhibits the E3 activity of PRKN, whereas, STUB1 enhances the E3 activity of PRKN through promotion of dissociation of HSP70 from PRKN-GPR37 complexes. Interacts with PSMD4 and PACRG. Interacts with LRRK2. Interacts with RANBP2. Interacts with SUMO1 but not SUMO2, which promotes nuclear localization and autoubiquitination. Interacts (via first RING-type domain) with AIMP2 (via N-terminus). Interacts with PSMA7 and RNF41. Interacts with PINK1. Forms a complex with PINK1 and PARK7. Interacts with CHPF, the interaction with isoform 2 may facilitate PRKN transport into the mitochondria. Interacts with MFN2 (phosphorylated), promotes PRKN localization in dysfunctional depolarized mitochondria. Interacts with FBXO7; this promotes translocation to dysfunctional depolarized mitochondria. Interacts with ZNF746. Interacts with heat shock protein 70 family members, including HSPA1L, HSPA1A and HSPA8; interaction HSPA1L promotes translocation to damaged mitochondria. Interacts with BAG4 and, to a lesser extent, BAG5; interaction with BAG4 inhibits translocation to damaged mitochondria. Forms a complex with PRKN and PARK7. Interacts with AMBRA1. In terms of processing, auto-ubiquitinates in an E2-dependent manner leading to its own degradation. Also polyubiquitinated by RNF41 for proteasomal degradation. S-nitrosylated. Post-translationally, phosphorylated. Activation requires phosphorylation at Ser-65 by PINK1 and binding to PINK1 phosphorylated ubiquitin. Phosphorylation at Thr-174 by PINK1 and at Thr-216 is important for mitochondrial localization. Expressed in all subdivisions of the brain (at protein level). Highly expressed in brainstem, cranial nerve, pontine, cerebellar nuclei, indusium griseum, nuclei reticularis, strata oriens and laccunosum moleculare of the hippocampal CA2 region. Low levels were found in the telencephalon and diencephalon. Expressed in heart, liver, skeletal muscle, kidney and testis.

The protein localises to the cytoplasm. It localises to the cytosol. It is found in the nucleus. The protein resides in the endoplasmic reticulum. Its subcellular location is the mitochondrion. The protein localises to the mitochondrion outer membrane. It localises to the cell projection. It is found in the neuron projection. The protein resides in the postsynaptic density. Its subcellular location is the presynapse. It catalyses the reaction [E2 ubiquitin-conjugating enzyme]-S-ubiquitinyl-L-cysteine + [acceptor protein]-L-lysine = [E2 ubiquitin-conjugating enzyme]-L-cysteine + [acceptor protein]-N(6)-ubiquitinyl-L-lysine.. The protein operates within protein modification; protein ubiquitination. Its activity is regulated as follows. In the autoinhibited state the side chain of Phe-462 inserts into a hydrophobic groove in RING-0, occluding the ubiquitin acceptor site Cys-430, whereas the REP repressor element binds RING-1 and blocks its E2-binding site. Activation of PRKN requires 2 steps: (1) phosphorylation at Ser-65 by PINK1 and (2) binding to phosphorylated ubiquitin, leading to unlock repression of the catalytic Cys-430 by the RING-0 region via an allosteric mechanism and converting PRKN to its fully-active form. According to another report, phosphorylation at Ser-65 by PINK1 is not essential for activation and only binding to phosphorylated ubiquitin is essential to unlock repression. In addition, ISG15 conjugation positively regulates its ubiquitin E3 ligase activity by suppressing the intramolecular interaction that maintains its autoinhibited conformation. Functionally, functions within a multiprotein E3 ubiquitin ligase complex, catalyzing the covalent attachment of ubiquitin moieties onto substrate proteins. Substrates include SYT11 and VDAC1. Other substrates are BCL2, CCNE1, GPR37, RHOT1/MIRO1, MFN1, MFN2, STUB1, SNCAIP, SEPTIN5, TOMM20, USP30, ZNF746, MIRO1 and AIMP2. Mediates monoubiquitination as well as 'Lys-6', 'Lys-11', 'Lys-48'-linked and 'Lys-63'-linked polyubiquitination of substrates depending on the context. Participates in the removal and/or detoxification of abnormally folded or damaged protein by mediating 'Lys-63'-linked polyubiquitination of misfolded proteins such as PARK7: 'Lys-63'-linked polyubiquitinated misfolded proteins are then recognized by HDAC6, leading to their recruitment to aggresomes, followed by degradation. Mediates 'Lys-63'-linked polyubiquitination of a 22 kDa O-linked glycosylated isoform of SNCAIP, possibly playing a role in Lewy-body formation. Mediates monoubiquitination of BCL2, thereby acting as a positive regulator of autophagy. Protects against mitochondrial dysfunction during cellular stress, by acting downstream of PINK1 to coordinate mitochondrial quality control mechanisms that remove and replace dysfunctional mitochondrial components. Depending on the severity of mitochondrial damage and/or dysfunction, activity ranges from preventing apoptosis and stimulating mitochondrial biogenesis to regulating mitochondrial dynamics and eliminating severely damaged mitochondria via mitophagy. Activation and recruitment onto the outer membrane of damaged/dysfunctional mitochondria (OMM) requires PINK1-mediated phosphorylation of both PRKN and ubiquitin. After mitochondrial damage, functions with PINK1 to mediate the decision between mitophagy or preventing apoptosis by inducing either the poly- or monoubiquitination of VDAC1, respectively; polyubiquitination of VDAC1 promotes mitophagy, while monoubiquitination of VDAC1 decreases mitochondrial calcium influx which ultimately inhibits apoptosis. When cellular stress results in irreversible mitochondrial damage, promotes the autophagic degradation of dysfunctional depolarized mitochondria (mitophagy) by promoting the ubiquitination of mitochondrial proteins such as TOMM20, RHOT1/MIRO1, MFN1 and USP30. Preferentially assembles 'Lys-6'-, 'Lys-11'- and 'Lys-63'-linked polyubiquitin chains, leading to mitophagy. The PINK1-PRKN pathway also promotes fission of damaged mitochondria by PINK1-mediated phosphorylation which promotes the PRKN-dependent degradation of mitochondrial proteins involved in fission such as MFN2. This prevents the refusion of unhealthy mitochondria with the mitochondrial network or initiates mitochondrial fragmentation facilitating their later engulfment by autophagosomes. Regulates motility of damaged mitochondria via the ubiquitination and subsequent degradation of MIRO1 and MIRO2; in motor neurons, this likely inhibits mitochondrial intracellular anterograde transport along the axons which probably increases the chance of the mitochondria undergoing mitophagy in the soma. Involved in mitochondrial biogenesis via the 'Lys-48'-linked polyubiquitination of transcriptional repressor ZNF746/PARIS which leads to its subsequent proteasomal degradation and allows activation of the transcription factor PPARGC1A. Limits the production of reactive oxygen species (ROS). Regulates cyclin-E during neuronal apoptosis. In collaboration with CHPF isoform 2, may enhance cell viability and protect cells from oxidative stress. Independently of its ubiquitin ligase activity, protects from apoptosis by the transcriptional repression of p53/TP53. May protect neurons against alpha synuclein toxicity, proteasomal dysfunction, GPR37 accumulation, and kainate-induced excitotoxicity. May play a role in controlling neurotransmitter trafficking at the presynaptic terminal and in calcium-dependent exocytosis. May represent a tumor suppressor gene. The chain is E3 ubiquitin-protein ligase parkin from Mus musculus (Mouse).